Here is a 659-residue protein sequence, read N- to C-terminus: Tetratricopeptide repeat protein 30 homolog (659 aa).

TPR repeat units lie at residues 3-36 (SQNM…LNGI), 43-76 (RAGL…VPDV), 143-176 (ATVK…GGFN), 178-210 (HIAY…GIRN), 391-424 (CRSA…RAWI), 450-483 (TWRL…NYDD), and 533-566 (CIVN…GSGA).

The protein belongs to the TTC30/dfy-1/fleer family.

Its subcellular location is the cell projection. The protein localises to the cilium. Required for polyglutamylation of axonemal tubulin in sensory cilia. Plays a role in anterograde intraflagellar transport (IFT), the process by which cilia precursors are transported from the base of the cilium to the site of their incorporation at the tip. The sequence is that of Tetratricopeptide repeat protein 30 homolog from Aedes aegypti (Yellowfever mosquito).